A 288-amino-acid chain; its full sequence is 2-hydroxy-6-oxononadienedioate/2-hydroxy-6-oxononatrienedioate hydrolase (288 aa).

The region spanning 38-273 is the AB hydrolase-1 domain; the sequence is VVLLHGSGPG…DCGHWAQWEH (236 aa). His-267 (proton acceptor) is an active-site residue.

Belongs to the AB hydrolase superfamily. MhpC family. In terms of assembly, homodimer.

The catalysed reaction is (2Z,4E)-2-hydroxy-6-oxonona-2,4-dienedioate + H2O = (2Z)-2-hydroxypenta-2,4-dienoate + succinate + H(+). The enzyme catalyses (2Z,4E,7E)-2-hydroxy-6-oxonona-2,4,7-trienedioate + H2O = (2Z)-2-hydroxypenta-2,4-dienoate + fumarate + H(+). It functions in the pathway aromatic compound metabolism; 3-phenylpropanoate degradation. In terms of biological role, catalyzes the cleavage of the C5-C6 bond of 2-hydroxy-6-oxononadienedioate and 2-hydroxy-6-oxononatrienedioate, a dienol ring fission product of the bacterial meta-cleavage pathway for degradation of phenylpropionic acid. The sequence is that of 2-hydroxy-6-oxononadienedioate/2-hydroxy-6-oxononatrienedioate hydrolase from Escherichia coli O139:H28 (strain E24377A / ETEC).